A 548-amino-acid polypeptide reads, in one-letter code: Natural resistance-associated macrophage protein 1 (548 aa).

Residues 1–11 (MSGDTGPSKQG) are compositionally biased toward polar residues. The disordered stretch occupies residues 1–38 (MSGDTGPSKQGGTRYGSISSPPSPGPQQAPPGGTYLGE). At 1-55 (MSGDTGPSKQGGTRYGSISSPPSPGPQQAPPGGTYLGEKIPIPDTESGAFSLRKL) the chain is on the cytoplasmic side. A helical transmembrane segment spans residues 56 to 73 (WAFTGPGFLMSIAFLDPG). At 74–82 (NIESDLQAG) the chain is on the extracellular side. A helical transmembrane segment spans residues 83–102 (AVAGFKLLWVLLWATVLGLL). At 103–139 (CQRLAARLGVVTGKDLGEVCHLYYPKVPRILLWLTIE) the chain is on the cytoplasmic side. Residues 140–160 (LAIVGSDMQEVIGTAIAFSLL) traverse the membrane as a helical segment. Residues 161-164 (SAGR) are Extracellular-facing. A helical transmembrane segment spans residues 165–184 (IPLWGGVLITVVDTFFFLFL). Residues 185 to 193 (DNYGLRKLE) are Cytoplasmic-facing. The helical transmembrane segment at 194-214 (AFFGFLITIMALTFGYEYVVA) threads the bilayer. Residues 215 to 237 (QPAQGALLQGLFLPSCRGCGQPE) are Extracellular-facing. The helical transmembrane segment at 238–256 (LLQAVGIIGAIIMPHNIYL) threads the bilayer. Topologically, residues 257–284 (HSSLVKSREVDRSRRADIREANMYFLIE) are cytoplasmic. The chain crosses the membrane as a helical span at residues 285 to 304 (ATIALSVSFLINLFVMAVFG). Residues 305–346 (QAFYKQTNQAAFNICAKSSLHDYAPIFPRNNLTVAVDIYQGG) lie on the Extracellular side of the membrane. N335 carries N-linked (GlcNAc...) asparagine glycosylation. A helical membrane pass occupies residues 347–366 (VILGCLFGPAALYIWAVGLL). Residues 367-397 (AAGQSSTMTGTYAGQFVMEGFLKLRWSRFAR) lie on the Cytoplasmic side of the membrane. Residues 398 to 415 (VLLTRSCAILPTVLLAVF) traverse the membrane as a helical segment. The Extracellular segment spans residues 416 to 426 (RDLRDLSGLND). Residues 427 to 447 (LLNVLQSLLLPFAVLPILTFT) form a helical membrane-spanning segment. Topologically, residues 448–463 (SMPALMQEFANGLVSK) are cytoplasmic. The chain crosses the membrane as a helical span at residues 464–485 (VITSSIMVLVCAVNLYFVISYV). At 486–493 (PSLPHPAY) the chain is on the extracellular side. Residues 494 to 513 (FSLVALLAAAYLGLTTYLVW) form a helical membrane-spanning segment. The Cytoplasmic portion of the chain corresponds to 514-548 (TCLITQGATFLAHNSHQRFLYGLPEEDQEKGRTSG).

It belongs to the NRAMP family.

The protein localises to the late endosome membrane. It is found in the lysosome membrane. The catalysed reaction is Zn(2+)(in) + H(+)(out) = Zn(2+)(out) + H(+)(in). It carries out the reaction Fe(2+)(in) + H(+)(out) = Fe(2+)(out) + H(+)(in). The enzyme catalyses Mn(2+)(in) + H(+)(out) = Mn(2+)(out) + H(+)(in). Its function is as follows. Macrophage-specific antiporter that fluxes metal ions in either direction against a proton gradient. Localized to late endosomal lysosomal membranes, delivers bivalent cations from the cytosol into these acidic compartments where they may directly affect antimicrobial activity. Involved in iron metabolism and host natural resistance to infection with intracellular parasites. Pathogen resistance involves sequestration of Fe(2+) and Mn(2+), cofactors of both prokaryotic and eukaryotic catalases and superoxide dismutases, not only to protect the macrophage against its own generation of reactive oxygen species, but to deny the cations to the pathogen for synthesis of its protective enzymes. The chain is Natural resistance-associated macrophage protein 1 (SLC11A1) from Bubalus bubalis (Domestic water buffalo).